Reading from the N-terminus, the 310-residue chain is MKGKNYKIVSLYSFFPFQENLIIDLKSKLLEIGYENDLSGLLIFASEGINGTICAEKNVIDIVINLLNKYADNRNLNIKVNFSKKKVFKKLKIKIKKEIVTMGVPEINPSENNGTYIDSANWNKLIKNQNTIVIDTRNHYEVSVGTFQNSINPNTRNFSEFPKWVDDQLDTHLENKESTNIAMFCTGGIRCEKATSLLKKKGYKNIYHLQGGILQYLDDIPKEKNLFEGECYVFDKRVALDQELEKGSYSICHACGMPVSIQDQERKEYRKGIQCHFCIDQFSDDDRKRFEERQKQIDRLKVGNHKIFKD.

Positions 127 to 225 (KNQNTIVIDT…YLDDIPKEKN (99 aa)) constitute a Rhodanese domain. Cys-185 serves as the catalytic Cysteine persulfide intermediate.

The protein belongs to the TrhO family.

The catalysed reaction is uridine(34) in tRNA + AH2 + O2 = 5-hydroxyuridine(34) in tRNA + A + H2O. Catalyzes oxygen-dependent 5-hydroxyuridine (ho5U) modification at position 34 in tRNAs. The chain is tRNA uridine(34) hydroxylase from Prochlorococcus marinus (strain MIT 9312).